A 166-amino-acid polypeptide reads, in one-letter code: SsrA-binding protein (166 aa).

Residues 143–166 (HDKREDDKRKQANRDMKSALARYR) are disordered. Over residues 144 to 159 (DKREDDKRKQANRDMK) the composition is skewed to basic and acidic residues.

This sequence belongs to the SmpB family.

Its subcellular location is the cytoplasm. In terms of biological role, required for rescue of stalled ribosomes mediated by trans-translation. Binds to transfer-messenger RNA (tmRNA), required for stable association of tmRNA with ribosomes. tmRNA and SmpB together mimic tRNA shape, replacing the anticodon stem-loop with SmpB. tmRNA is encoded by the ssrA gene; the 2 termini fold to resemble tRNA(Ala) and it encodes a 'tag peptide', a short internal open reading frame. During trans-translation Ala-aminoacylated tmRNA acts like a tRNA, entering the A-site of stalled ribosomes, displacing the stalled mRNA. The ribosome then switches to translate the ORF on the tmRNA; the nascent peptide is terminated with the 'tag peptide' encoded by the tmRNA and targeted for degradation. The ribosome is freed to recommence translation, which seems to be the essential function of trans-translation. The polypeptide is SsrA-binding protein (Prochlorococcus marinus (strain MIT 9211)).